Consider the following 931-residue polypeptide: Protein unc-45 homolog B (931 aa).

3 TPR repeats span residues 6-39, 43-76, and 77-110; these read AVQL…TKDK, ATLY…NSSD, and IKAL…EPRN. 3 ARM repeats span residues 169 to 208, 211 to 250, and 751 to 790; these read EAGA…GMCS, QARA…AIID, and DKLR…NMVL.

As to quaternary structure, interacts with HSP90 in an ATP-independent manner. Interacts with UBE4B; the interaction may target UNC45B for proteasomal degradation. Expressed in eye lens tissues. Expressed in muscle (at protein level).

The protein localises to the cytoplasm. It localises to the myofibril. The protein resides in the sarcomere. It is found in the z line. Its subcellular location is the a band. The protein localises to the perinuclear region. It localises to the cytosol. In terms of biological role, acts as a co-chaperone for HSP90 and is required for proper folding of the myosin motor domain. Plays a role in sarcomere formation during muscle cell development. Is necessary for normal early lens development. The protein is Protein unc-45 homolog B of Homo sapiens (Human).